Consider the following 890-residue polypeptide: Alanine--tRNA ligase (890 aa).

Residues His568, His572, Cys680, and His684 each coordinate Zn(2+).

Belongs to the class-II aminoacyl-tRNA synthetase family. Requires Zn(2+) as cofactor.

The protein localises to the cytoplasm. The enzyme catalyses tRNA(Ala) + L-alanine + ATP = L-alanyl-tRNA(Ala) + AMP + diphosphate. Catalyzes the attachment of alanine to tRNA(Ala) in a two-step reaction: alanine is first activated by ATP to form Ala-AMP and then transferred to the acceptor end of tRNA(Ala). Also edits incorrectly charged Ser-tRNA(Ala) and Gly-tRNA(Ala) via its editing domain. The polypeptide is Alanine--tRNA ligase (Psychrobacter arcticus (strain DSM 17307 / VKM B-2377 / 273-4)).